The following is a 295-amino-acid chain: Pyridoxal 5'-phosphate synthase subunit PdxS (295 aa).

D-ribose 5-phosphate is bound at residue Asp25. Lys82 (schiff-base intermediate with D-ribose 5-phosphate) is an active-site residue. Gly154 contributes to the D-ribose 5-phosphate binding site. Arg166 contacts D-glyceraldehyde 3-phosphate. Residues Gly215 and Gly236–Ser237 contribute to the D-ribose 5-phosphate site.

It belongs to the PdxS/SNZ family. As to quaternary structure, in the presence of PdxT, forms a dodecamer of heterodimers.

The catalysed reaction is aldehydo-D-ribose 5-phosphate + D-glyceraldehyde 3-phosphate + L-glutamine = pyridoxal 5'-phosphate + L-glutamate + phosphate + 3 H2O + H(+). It functions in the pathway cofactor biosynthesis; pyridoxal 5'-phosphate biosynthesis. Catalyzes the formation of pyridoxal 5'-phosphate from ribose 5-phosphate (RBP), glyceraldehyde 3-phosphate (G3P) and ammonia. The ammonia is provided by the PdxT subunit. Can also use ribulose 5-phosphate and dihydroxyacetone phosphate as substrates, resulting from enzyme-catalyzed isomerization of RBP and G3P, respectively. The sequence is that of Pyridoxal 5'-phosphate synthase subunit PdxS from Actinobacillus pleuropneumoniae serotype 7 (strain AP76).